The chain runs to 163 residues: MTRSAALFCRPVPAILFILSLLILDQAIKYAVEVSLPMHELVPVVPMLGLFRTHNLGVAFSMLSHLDAWVIVVMRLAIVAFVAWLWRQTSRDHQFAHLGYCLIIAGAFGNIIDRFTYGYVVDYILFHTETWSFAVFNLADSLITIGAGFILLEELLVLRRSKG.

3 helical membrane-spanning segments follow: residues 4–24 (SAALFCRPVPAILFILSLLIL), 66–86 (LDAWVIVVMRLAIVAFVAWLW), and 92–112 (DHQFAHLGYCLIIAGAFGNII). Residues aspartate 122 and aspartate 140 contribute to the active site. The chain crosses the membrane as a helical span at residues 132-152 (SFAVFNLADSLITIGAGFILL).

Belongs to the peptidase A8 family.

The protein resides in the cell inner membrane. It catalyses the reaction Release of signal peptides from bacterial membrane prolipoproteins. Hydrolyzes -Xaa-Yaa-Zaa-|-(S,diacylglyceryl)Cys-, in which Xaa is hydrophobic (preferably Leu), and Yaa (Ala or Ser) and Zaa (Gly or Ala) have small, neutral side chains.. It participates in protein modification; lipoprotein biosynthesis (signal peptide cleavage). Its function is as follows. This protein specifically catalyzes the removal of signal peptides from prolipoproteins. The sequence is that of Lipoprotein signal peptidase from Allorhizobium ampelinum (strain ATCC BAA-846 / DSM 112012 / S4) (Agrobacterium vitis (strain S4)).